The chain runs to 169 residues: Protein GrpE (169 aa).

The segment at 1–25 (MSEEKQNGQIQEETVENSENQNNEL) is disordered. The span at 7-23 (NGQIQEETVENSENQNN) shows a compositional bias: polar residues.

It belongs to the GrpE family. Homodimer.

The protein resides in the cytoplasm. Participates actively in the response to hyperosmotic and heat shock by preventing the aggregation of stress-denatured proteins, in association with DnaK and GrpE. It is the nucleotide exchange factor for DnaK and may function as a thermosensor. Unfolded proteins bind initially to DnaJ; upon interaction with the DnaJ-bound protein, DnaK hydrolyzes its bound ATP, resulting in the formation of a stable complex. GrpE releases ADP from DnaK; ATP binding to DnaK triggers the release of the substrate protein, thus completing the reaction cycle. Several rounds of ATP-dependent interactions between DnaJ, DnaK and GrpE are required for fully efficient folding. The chain is Protein GrpE from Campylobacter lari (strain RM2100 / D67 / ATCC BAA-1060).